Here is a 215-residue protein sequence, read N- to C-terminus: Probable phosphoglycerate mutase GpmB (215 aa).

Substrate contacts are provided by residues 8-15 (RHGETEWN), 21-22 (QG), Arg-58, 82-85 (ELDM), and 151-152 (GI). His-9 acts as the Tele-phosphohistidine intermediate in catalysis. Catalysis depends on Glu-82, which acts as the Proton donor/acceptor.

It belongs to the phosphoglycerate mutase family. GpmB subfamily.

It catalyses the reaction (2R)-2-phosphoglycerate = (2R)-3-phosphoglycerate. Its pathway is carbohydrate degradation; glycolysis; pyruvate from D-glyceraldehyde 3-phosphate: step 3/5. The protein is Probable phosphoglycerate mutase GpmB of Proteus mirabilis (strain HI4320).